A 640-amino-acid polypeptide reads, in one-letter code: 1,4-alpha-glucan branching enzyme GlgB (640 aa).

The active-site Nucleophile is aspartate 317. Catalysis depends on glutamate 370, which acts as the Proton donor.

Belongs to the glycosyl hydrolase 13 family. GlgB subfamily. As to quaternary structure, monomer.

It carries out the reaction Transfers a segment of a (1-&gt;4)-alpha-D-glucan chain to a primary hydroxy group in a similar glucan chain.. The protein operates within glycan biosynthesis; glycogen biosynthesis. Its function is as follows. Catalyzes the formation of the alpha-1,6-glucosidic linkages in glycogen by scission of a 1,4-alpha-linked oligosaccharide from growing alpha-1,4-glucan chains and the subsequent attachment of the oligosaccharide to the alpha-1,6 position. In Nitratidesulfovibrio vulgaris (strain DP4) (Desulfovibrio vulgaris), this protein is 1,4-alpha-glucan branching enzyme GlgB.